We begin with the raw amino-acid sequence, 599 residues long: Elongation factor 4 (599 aa).

One can recognise a tr-type G domain in the interval 5-187 (SHIRNFSIIA…RLVTVIPAPE (183 aa)). GTP is bound by residues 17-22 (DHGKST) and 134-137 (NKMD).

The protein belongs to the TRAFAC class translation factor GTPase superfamily. Classic translation factor GTPase family. LepA subfamily.

Its subcellular location is the cell inner membrane. It catalyses the reaction GTP + H2O = GDP + phosphate + H(+). In terms of biological role, required for accurate and efficient protein synthesis under certain stress conditions. May act as a fidelity factor of the translation reaction, by catalyzing a one-codon backward translocation of tRNAs on improperly translocated ribosomes. Back-translocation proceeds from a post-translocation (POST) complex to a pre-translocation (PRE) complex, thus giving elongation factor G a second chance to translocate the tRNAs correctly. Binds to ribosomes in a GTP-dependent manner. In Pseudomonas paraeruginosa (strain DSM 24068 / PA7) (Pseudomonas aeruginosa (strain PA7)), this protein is Elongation factor 4.